The sequence spans 439 residues: IAA-amino acid hydrolase ILR1-like 2 (439 aa).

A signal peptide spans methionine 1–serine 21. 5 residues coordinate Mn(2+): cysteine 137, histidine 139, glutamate 173, histidine 197, and histidine 397. The short motif at histidine 436–leucine 439 is the Prevents secretion from ER element.

Belongs to the peptidase M20 family. As to quaternary structure, monomer. Requires Mn(2+) as cofactor. Expressed in leaves, stems, siliques, seeds and flowers. Detected in the distal tips of cotyledons and seedling leaves, hydathodes of leaves from mature plants, pollen, ovules and developing seeds.

It is found in the endoplasmic reticulum lumen. Its function is as follows. Hydrolyzes certain amino acid conjugates of the plant growth regulator indole-3-acetic acid (IAA), including IAA-Ala, IAA-Leu, IAA-Met, IAA-Phe, IAA-Ser, IAA-Thr, IAA-Tyr and IAA-Val. Is the most efficient enzyme of the ILL family for IAA-Ala. Not important for IAA-Leu hydrolysis in roots. May act with ILR1 to provide free IAA to germinating seedlings. The chain is IAA-amino acid hydrolase ILR1-like 2 from Arabidopsis thaliana (Mouse-ear cress).